The primary structure comprises 114 residues: Hydrogenase maturation factor HypA (114 aa).

Position 2 (His-2) interacts with Ni(2+). The Zn(2+) site is built by Cys-74, Cys-77, Cys-90, and Cys-93.

It belongs to the HypA/HybF family.

Involved in the maturation of [NiFe] hydrogenases. Required for nickel insertion into the metal center of the hydrogenase. This chain is Hydrogenase maturation factor HypA, found in Campylobacter jejuni subsp. jejuni serotype O:2 (strain ATCC 700819 / NCTC 11168).